The sequence spans 409 residues: Translation initiation factor 2 subunit gamma (409 aa).

Residues 7 to 203 (QPEVNIGLVG…TIESEIPTPD (197 aa)) form the tr-type G domain. The G1 stretch occupies residues 16-23 (GHVDHGKT). Mg(2+)-binding residues include aspartate 19, threonine 23, glycine 44, and serine 46. 19 to 24 (DHGKTT) contacts GTP. The interval 44-48 (GISIR) is G2. Positions 90–93 (DAPG) are G3. GTP contacts are provided by residues 146–149 (NKID) and 181–183 (SAQ). The segment at 146-149 (NKID) is G4. The segment at 181 to 183 (SAQ) is G5.

The protein belongs to the TRAFAC class translation factor GTPase superfamily. Classic translation factor GTPase family. EIF2G subfamily. Heterotrimer composed of an alpha, a beta and a gamma chain. Requires Mg(2+) as cofactor.

The enzyme catalyses GTP + H2O = GDP + phosphate + H(+). Functionally, eIF-2 functions in the early steps of protein synthesis by forming a ternary complex with GTP and initiator tRNA. The chain is Translation initiation factor 2 subunit gamma from Natronomonas pharaonis (strain ATCC 35678 / DSM 2160 / CIP 103997 / JCM 8858 / NBRC 14720 / NCIMB 2260 / Gabara) (Halobacterium pharaonis).